The sequence spans 510 residues: Holliday junction branch migration ATPase PINA (510 aa).

Homohexamer. Interacts with Holliday junction resolvase Hjc, interacts with helicase Hjm (Hel308).

It carries out the reaction ATP + H2O = ADP + phosphate + H(+). In terms of biological role, important for growth at low temperatures (less than 65 degrees Celsius in this organism). Promotes Holliday junction (HJ) branch migration and unwinds Y-shaped DNA (but not replication forks or dsDNA) in an ATP hydrolysis-dependent manner. Stimulates cleavage by HJ resolvase Hjc. Hjc, Hjm (Hel308) and PINA coordinate HJ migration and cleavage of replication forks in a coordinated way. Probably acts as an ATP-dependent pump that pulls DNA through the hexamer. This chain is Holliday junction branch migration ATPase PINA, found in Sulfolobus acidocaldarius (strain ATCC 33909 / DSM 639 / JCM 8929 / NBRC 15157 / NCIMB 11770).